Here is a 274-residue protein sequence, read N- to C-terminus: Chromatin modification-related protein YNG2 (274 aa).

Residues 121–194 (EDEMESGPDF…ASTEREGTLD (74 aa)) form a disordered region. Over residues 166–180 (THREKSYNKGDDTAD) the composition is skewed to basic and acidic residues. A PHD-type zinc finger spans residues 215-264 (NLYCFCQRVSFGEMVACDGPNCKYEWFHYECVNLTEPPKGTWYCPDCKQE). Residues C218, C220, C231, C236, H242, C245, C258, and C261 each contribute to the Zn(2+) site.

The protein belongs to the ING family. Interacts with H3K4me3 and to a lesser extent with H3K4me2. Component of the NuA4 histone acetyltransferase complex.

Its subcellular location is the nucleus. Functionally, component of the NuA4 histone acetyltransferase complex which is involved in transcriptional activation of selected genes principally by acetylation of nucleosomal histone H4 and H2A. The NuA4 complex is also involved in DNA repair. Involved in cell cycle progression and meiosis. In Candida glabrata (strain ATCC 2001 / BCRC 20586 / JCM 3761 / NBRC 0622 / NRRL Y-65 / CBS 138) (Yeast), this protein is Chromatin modification-related protein YNG2 (YNG2).